Reading from the N-terminus, the 380-residue chain is uncharacterized protein (380 aa).

Transmembrane regions (helical) follow at residues 15 to 35 (LFHP…LAFP), 45 to 65 (LFKI…PFIF), 75 to 95 (ILYL…FKIT), 98 to 118 (LFLS…FVKF), 123 to 143 (IFVD…VLIY), 182 to 202 (IIAF…MLFI), 217 to 237 (MVLL…IILL), 303 to 323 (GTIY…LGVI), and 341 to 361 (LLLA…LSLL).

The protein resides in the cell membrane. This is an uncharacterized protein from Methanocaldococcus jannaschii (strain ATCC 43067 / DSM 2661 / JAL-1 / JCM 10045 / NBRC 100440) (Methanococcus jannaschii).